A 265-amino-acid polypeptide reads, in one-letter code: Energy-coupling factor transporter transmembrane protein EcfT (265 aa).

Transmembrane regions (helical) follow at residues 29 to 49, 73 to 93, 110 to 130, 143 to 163, and 242 to 262; these read IILFATLIFLANNTVTYAILI, VWILILFTVVLHIFITKGGTV, AIFISLRLGLLILISSLLTLT, LLGPLGKIGIPVHDIALMMSI, and FTWRDGIVAVVSVILVIVIGW.

This sequence belongs to the energy-coupling factor EcfT family. In terms of assembly, forms a stable energy-coupling factor (ECF) transporter complex composed of 2 membrane-embedded substrate-binding proteins (S component), 2 ATP-binding proteins (A component) and 2 transmembrane proteins (T component). May be able to interact with more than 1 S component at a time.

The protein localises to the cell membrane. In terms of biological role, transmembrane (T) component of an energy-coupling factor (ECF) ABC-transporter complex. Unlike classic ABC transporters this ECF transporter provides the energy necessary to transport a number of different substrates. The polypeptide is Energy-coupling factor transporter transmembrane protein EcfT (Brevibacillus brevis (strain 47 / JCM 6285 / NBRC 100599)).